The primary structure comprises 459 residues: DNA-binding protein P3A2 (459 aa).

The segment at M1–S25 is disordered.

The protein belongs to the NRF1/Ewg family.

The protein resides in the nucleus. In terms of biological role, transcriptional regulator that interacts with specific sites in the control region of the cyIIIa actin gene. Also binds specifically to similar target sites located in the regulatory region of the SM50 gene. This Strongylocentrotus purpuratus (Purple sea urchin) protein is DNA-binding protein P3A2.